Consider the following 897-residue polypeptide: Translation initiation factor IF-2 (897 aa).

Residues 402–570 (NRAPIVTIMG…SILVQSEILE (169 aa)) enclose the tr-type G domain. The tract at residues 411–418 (GHVDHGKT) is G1. 411–418 (GHVDHGKT) contacts GTP. The segment at 436–440 (GITQN) is G2. Residues 458-461 (DTPG) form a G3 region. GTP is bound by residues 458-462 (DTPGH) and 512-515 (NKID). The tract at residues 512 to 515 (NKID) is G4. The G5 stretch occupies residues 548–550 (SAV).

This sequence belongs to the TRAFAC class translation factor GTPase superfamily. Classic translation factor GTPase family. IF-2 subfamily.

It localises to the cytoplasm. Its function is as follows. One of the essential components for the initiation of protein synthesis. Protects formylmethionyl-tRNA from spontaneous hydrolysis and promotes its binding to the 30S ribosomal subunits. Also involved in the hydrolysis of GTP during the formation of the 70S ribosomal complex. This is Translation initiation factor IF-2 from Blochmanniella floridana.